Reading from the N-terminus, the 320-residue chain is Acetyl-coenzyme A carboxylase carboxyl transferase subunit alpha (320 aa).

The CoA carboxyltransferase C-terminal domain maps to 33–294 (AFDGEIESLR…GDAVEEELKA (262 aa)).

It belongs to the AccA family. In terms of assembly, acetyl-CoA carboxylase is a heterohexamer composed of biotin carboxyl carrier protein (AccB), biotin carboxylase (AccC) and two subunits each of ACCase subunit alpha (AccA) and ACCase subunit beta (AccD).

The protein resides in the cytoplasm. The catalysed reaction is N(6)-carboxybiotinyl-L-lysyl-[protein] + acetyl-CoA = N(6)-biotinyl-L-lysyl-[protein] + malonyl-CoA. Its pathway is lipid metabolism; malonyl-CoA biosynthesis; malonyl-CoA from acetyl-CoA: step 1/1. Functionally, component of the acetyl coenzyme A carboxylase (ACC) complex. First, biotin carboxylase catalyzes the carboxylation of biotin on its carrier protein (BCCP) and then the CO(2) group is transferred by the carboxyltransferase to acetyl-CoA to form malonyl-CoA. This chain is Acetyl-coenzyme A carboxylase carboxyl transferase subunit alpha, found in Phenylobacterium zucineum (strain HLK1).